Consider the following 368-residue polypeptide: Ubl carboxyl-terminal hydrolase 18 (368 aa).

The tract at residues 31-48 (MKRKRVLSRDLCSAWDSP) is mediates interaction with IFNAR2. Residues 48 to 109 (PHGLVGLHNI…LLLLLEKMQD (62 aa)) are mediates interaction with STAT2. A USP domain is found at 52 to 366 (VGLHNIGQTC…TAYLLVYTKT (315 aa)). C61 acts as the Nucleophile in catalysis. The interval 299-308 (ELFAVIAHVG) is mediates interaction with STAT2 and necessary for the negative regulation of the type I IFN signaling pathway. Residues 309-368 (MADFGHYCAYIRNPVDGKWFCFNDSHVCWVTWKDVQCTYGNHRYRWRETAYLLVYTKTGS) form a mediates interaction with IFNAR2 region. The active-site Proton acceptor is the H314.

It belongs to the peptidase C19 family. As to quaternary structure, interacts with STAT2; the interaction is direct. Interacts with IFNAR2; indirectly via STAT2, it negatively regulates the assembly of the ternary interferon-IFNAR1-IFNAR2 complex and inhibits type I interferon signaling. Interacts with STING1. Interacts with USP20.

The catalysed reaction is Thiol-dependent hydrolysis of ester, thioester, amide, peptide and isopeptide bonds formed by the C-terminal Gly of ubiquitin (a 76-residue protein attached to proteins as an intracellular targeting signal).. Interferon-induced ISG15-specific protease that plays a crucial role for maintaining a proper balance of ISG15-conjugated proteins in cells. Regulates protein ISGylation by efficiently cleaving ISG15 conjugates linked via isopeptide bonds. Regulates T-cell activation and T-helper 17 (Th17) cell differentiation by deubiquitinating TAK1, likely to keep TAK1-TAB complexes in steady conditions. In turn, restricts activation of NF-kappa-B, NFAT, and JNK as well as expression of IL2 in T-cells after TCR activation. Acts as a molecular adapter with USP20 to promote innate antiviral response through deubiquitinating STING1. Involved also in the negative regulation of the inflammatory response triggered by type I interferon. Upon recruitment by STAT2 to the type I interferon receptor subunit IFNAR2 interferes with the assembly of the ternary interferon-IFNAR1-IFNAR2 complex and acts as a negative regulator of the type I interferon signaling pathway. This is Ubl carboxyl-terminal hydrolase 18 (Usp18) from Mus musculus (Mouse).